The primary structure comprises 337 residues: Membrane-spanning 4-domains subfamily A member 18 (337 aa).

The interval Leu101–Pro121 is disordered. 4 helical membrane passes run Leu155–Leu175, Ala183–Val203, Met220–Ile240, and Gly252–Gly272.

This sequence belongs to the MS4A family.

It localises to the membrane. This Bos taurus (Bovine) protein is Membrane-spanning 4-domains subfamily A member 18 (MS4A18).